Reading from the N-terminus, the 132-residue chain is Small ribosomal subunit protein uS8 (132 aa).

It belongs to the universal ribosomal protein uS8 family. In terms of assembly, part of the 30S ribosomal subunit. Contacts proteins S5 and S12.

Functionally, one of the primary rRNA binding proteins, it binds directly to 16S rRNA central domain where it helps coordinate assembly of the platform of the 30S subunit. This Mycoplasmopsis synoviae (strain 53) (Mycoplasma synoviae) protein is Small ribosomal subunit protein uS8.